Reading from the N-terminus, the 73-residue chain is UPF0150 protein ssl0259 (73 aa).

Belongs to the UPF0150 family.

In Synechocystis sp. (strain ATCC 27184 / PCC 6803 / Kazusa), this protein is UPF0150 protein ssl0259.